A 111-amino-acid chain; its full sequence is Nucleoid-associated protein Tmel_0542 (111 aa).

This sequence belongs to the YbaB/EbfC family. In terms of assembly, homodimer.

The protein localises to the cytoplasm. It is found in the nucleoid. Binds to DNA and alters its conformation. May be involved in regulation of gene expression, nucleoid organization and DNA protection. The sequence is that of Nucleoid-associated protein Tmel_0542 from Thermosipho melanesiensis (strain DSM 12029 / CIP 104789 / BI429).